Reading from the N-terminus, the 158-residue chain is 3-dehydroquinate dehydratase (158 aa).

Tyrosine 24 serves as the catalytic Proton acceptor. Substrate-binding residues include asparagine 75, histidine 81, and aspartate 88. Histidine 101 (proton donor) is an active-site residue. Residues 102-103 (LS) and arginine 112 each bind substrate.

This sequence belongs to the type-II 3-dehydroquinase family. In terms of assembly, homododecamer.

It carries out the reaction 3-dehydroquinate = 3-dehydroshikimate + H2O. The protein operates within metabolic intermediate biosynthesis; chorismate biosynthesis; chorismate from D-erythrose 4-phosphate and phosphoenolpyruvate: step 3/7. In terms of biological role, catalyzes a trans-dehydration via an enolate intermediate. This Bartonella bacilliformis (strain ATCC 35685 / KC583 / Herrer 020/F12,63) protein is 3-dehydroquinate dehydratase.